A 180-amino-acid chain; its full sequence is Ribulose bisphosphate carboxylase small subunit, chloroplastic 4 (180 aa).

The N-terminal 56 residues, 1–56, are a transit peptide targeting the chloroplast; sequence MASSIVSSAAVATRGNGAQASMVAPFTGLKSTASFPVSRKQNLDITSIASNGGRVS.

Belongs to the RuBisCO small chain family. As to quaternary structure, heterohexadecamer of 8 large and 8 small subunits. (Microbial infection) Binds to tobamovirus movement protein; this interaction seems required for viral systemic movement.

Its subcellular location is the plastid. It localises to the chloroplast. The protein localises to the cell junction. The protein resides in the plasmodesma. Functionally, ruBisCO catalyzes two reactions: the carboxylation of D-ribulose 1,5-bisphosphate, the primary event in carbon dioxide fixation, as well as the oxidative fragmentation of the pentose substrate. Both reactions occur simultaneously and in competition at the same active site. Although the small subunit is not catalytic it is essential for maximal activity. Involved in antiviral defenses. The sequence is that of Ribulose bisphosphate carboxylase small subunit, chloroplastic 4 from Solanum lycopersicum (Tomato).